We begin with the raw amino-acid sequence, 570 residues long: Adenine deaminase (570 aa).

This sequence belongs to the metallo-dependent hydrolases superfamily. Adenine deaminase family. It depends on Mn(2+) as a cofactor.

It carries out the reaction adenine + H2O + H(+) = hypoxanthine + NH4(+). This Petrotoga mobilis (strain DSM 10674 / SJ95) protein is Adenine deaminase.